Reading from the N-terminus, the 948-residue chain is Phosphatidylinositol-glycan-specific phospholipase D (948 aa).

The first 24 residues, 1–24 (MKNKIILLWLLLIVILCTISNVKG), serve as a signal peptide directing secretion. Residues N39, N78, N148, N300, N433, N452, N506, and N535 are each glycosylated (N-linked (GlcNAc...) asparagine). 4 FG-GAP repeats span residues 451-512 (TNFT…SVTI), 526-588 (QVAT…NPAG), 596-656 (LPSI…RISG), and 663-724 (DADY…LNSF). 2 N-linked (GlcNAc...) asparagine glycosylation sites follow: N749 and N788. FG-GAP repeat units lie at residues 799–861 (NLLL…LTND) and 895–948 (SSGG…NIFQ).

The protein belongs to the GPLD1 family. Ca(2+) serves as cofactor.

Its subcellular location is the secreted. It carries out the reaction a 6-(alpha-D-glucosaminyl)-1-(1,2-diacyl-sn-glycero-3-phospho)-1D-myo-inositol + H2O = 6-(alpha-D-glucosaminyl)-1D-myo-inositol + a 1,2-diacyl-sn-glycero-3-phosphate + H(+). In terms of biological role, hydrolyzes the inositol phosphate linkage in proteins anchored by phosphatidylinositol glycans (GPI-anchor) thus releasing these proteins from the membrane. May also cleave GPI anchor intermediates intracellularly. In Dictyostelium discoideum (Social amoeba), this protein is Phosphatidylinositol-glycan-specific phospholipase D (pldG).